The chain runs to 261 residues: Ribosomal RNA small subunit methyltransferase A (261 aa).

The S-adenosyl-L-methionine site is built by Asn11, Leu13, Gly38, Glu59, Asp84, and Ser106.

Belongs to the class I-like SAM-binding methyltransferase superfamily. rRNA adenine N(6)-methyltransferase family. RsmA subfamily.

Its subcellular location is the cytoplasm. The catalysed reaction is adenosine(1518)/adenosine(1519) in 16S rRNA + 4 S-adenosyl-L-methionine = N(6)-dimethyladenosine(1518)/N(6)-dimethyladenosine(1519) in 16S rRNA + 4 S-adenosyl-L-homocysteine + 4 H(+). Its function is as follows. Specifically dimethylates two adjacent adenosines (A1518 and A1519) in the loop of a conserved hairpin near the 3'-end of 16S rRNA in the 30S particle. May play a critical role in biogenesis of 30S subunits. The polypeptide is Ribosomal RNA small subunit methyltransferase A (Wigglesworthia glossinidia brevipalpis).